A 530-amino-acid chain; its full sequence is Hyccin 2 (530 aa).

Residues T30 and T306 each carry the phosphothreonine modification. S321 and S341 each carry phosphoserine. Positions 328–410 are disordered; it reads RREGAEGVNG…DSVVRKQYVQ (83 aa). Positions 353-373 are enriched in polar residues; that stretch reads SGASLSSQPIGTKPSSSSQRG. Phosphoserine occurs at positions 430, 442, 444, and 491. The interval 498-530 is disordered; it reads GQAGEGKELLSPGAPLTKQSRSPSFNMQLISQV. Residues 514 to 530 are compositionally biased toward polar residues; it reads TKQSRSPSFNMQLISQV.

The protein belongs to the Hyccin family. As to quaternary structure, component of a phosphatidylinositol 4-kinase (PI4K) complex, composed of PI4KA, EFR3 (EFR3A or EFR3B), TTC7 (TTC7A or TTC7B) and HYCC (HYCC1 or HYCC2).

The protein localises to the cytoplasm. Its subcellular location is the cytosol. It localises to the cell membrane. Component of a complex required to localize phosphatidylinositol 4-kinase (PI4K) to the plasma membrane. The polypeptide is Hyccin 2 (HYCC2) (Pongo abelii (Sumatran orangutan)).